Here is a 369-residue protein sequence, read N- to C-terminus: Actin-related protein T3 (369 aa).

It belongs to the actin family. As to quaternary structure, interacts with PFN3. Testis specific (at protein level). Expressed specifically in haploid germ cells.

It localises to the cytoplasm. It is found in the cytoskeleton. Its subcellular location is the nucleus. The polypeptide is Actin-related protein T3 (Actrt3) (Mus musculus (Mouse)).